We begin with the raw amino-acid sequence, 428 residues long: Cytochrome c biogenesis protein CcsB (428 aa).

3 consecutive transmembrane segments (helical) span residues 14 to 34 (LRFA…GTFI), 72 to 92 (SNWF…CSFR), and 162 to 182 (LGPI…AYGN).

It belongs to the Ccs1/CcsB family. In terms of assembly, may interact with CcsA.

Its subcellular location is the cellular thylakoid membrane. Functionally, required during biogenesis of c-type cytochromes (cytochrome c6 and cytochrome f) at the step of heme attachment. The chain is Cytochrome c biogenesis protein CcsB from Prochlorococcus marinus subsp. pastoris (strain CCMP1986 / NIES-2087 / MED4).